The following is a 181-amino-acid chain: NADH-quinone oxidoreductase subunit I 2 (181 aa).

4Fe-4S ferredoxin-type domains are found at residues 44–74 (LNRYPDGLEKCIGCELCAWACPADAIYVEGA) and 90–119 (RVYQINYLRCIGCGLCVEACPTRALTMTND). Cysteine 54, cysteine 57, cysteine 60, cysteine 64, cysteine 99, cysteine 102, cysteine 105, and cysteine 109 together coordinate [4Fe-4S] cluster.

Belongs to the complex I 23 kDa subunit family. In terms of assembly, NDH-1 is composed of 14 different subunits. Subunits NuoA, H, J, K, L, M, N constitute the membrane sector of the complex. Requires [4Fe-4S] cluster as cofactor.

Its subcellular location is the cell membrane. It carries out the reaction a quinone + NADH + 5 H(+)(in) = a quinol + NAD(+) + 4 H(+)(out). NDH-1 shuttles electrons from NADH, via FMN and iron-sulfur (Fe-S) centers, to quinones in the respiratory chain. The immediate electron acceptor for the enzyme in this species is believed to be menaquinone. Couples the redox reaction to proton translocation (for every two electrons transferred, four hydrogen ions are translocated across the cytoplasmic membrane), and thus conserves the redox energy in a proton gradient. In Mycolicibacterium paratuberculosis (strain ATCC BAA-968 / K-10) (Mycobacterium paratuberculosis), this protein is NADH-quinone oxidoreductase subunit I 2.